The chain runs to 81 residues: ATP synthase subunit c, chloroplastic (81 aa).

2 helical membrane-spanning segments follow: residues 3-23 and 57-77; these read PLISSASVIAAGLAVGLASIG and LAFMEALTIYGLVVALALLFA.

Belongs to the ATPase C chain family. F-type ATPases have 2 components, F(1) - the catalytic core - and F(0) - the membrane proton channel. F(1) has five subunits: alpha(3), beta(3), gamma(1), delta(1), epsilon(1). F(0) has four main subunits: a(1), b(1), b'(1) and c(10-14). The alpha and beta chains form an alternating ring which encloses part of the gamma chain. F(1) is attached to F(0) by a central stalk formed by the gamma and epsilon chains, while a peripheral stalk is formed by the delta, b and b' chains.

The protein localises to the plastid. It is found in the chloroplast thylakoid membrane. Its function is as follows. F(1)F(0) ATP synthase produces ATP from ADP in the presence of a proton or sodium gradient. F-type ATPases consist of two structural domains, F(1) containing the extramembraneous catalytic core and F(0) containing the membrane proton channel, linked together by a central stalk and a peripheral stalk. During catalysis, ATP synthesis in the catalytic domain of F(1) is coupled via a rotary mechanism of the central stalk subunits to proton translocation. Key component of the F(0) channel; it plays a direct role in translocation across the membrane. A homomeric c-ring of between 10-14 subunits forms the central stalk rotor element with the F(1) delta and epsilon subunits. In Ceratophyllum demersum (Rigid hornwort), this protein is ATP synthase subunit c, chloroplastic.